Reading from the N-terminus, the 69-residue chain is DNA-directed RNA polymerase subunit omega (69 aa).

This sequence belongs to the RNA polymerase subunit omega family. The RNAP catalytic core consists of 2 alpha, 1 beta, 1 beta' and 1 omega subunit. When a sigma factor is associated with the core the holoenzyme is formed, which can initiate transcription.

The catalysed reaction is RNA(n) + a ribonucleoside 5'-triphosphate = RNA(n+1) + diphosphate. Its function is as follows. Promotes RNA polymerase assembly. Latches the N- and C-terminal regions of the beta' subunit thereby facilitating its interaction with the beta and alpha subunits. The protein is DNA-directed RNA polymerase subunit omega of Exiguobacterium sp. (strain ATCC BAA-1283 / AT1b).